The sequence spans 271 residues: MKIDIVSVFPEYFEVMNLSLMGKAQAKGLLEIKAHNLRDWTHDVHHSVDDTPVGGGAGMVMKPEVWSECLDELLGFSQPSGSPAPSGAPVLIFPNPSAPLFTQRDATELSHADHLLFGCGRYEGYDARIPDYYRAQGVDVREYSIGDYVLNGGEVAVSVMLEAITRLMPGFMGNPDSIVEESYTGEGALLEHRQYTKPAVWRGIAVPDVLLSGDHGKVDRFRRDEALARTAEIRPDLIAALDCKALDKADRKTLMALGWEVSAAHPRRLAD.

S-adenosyl-L-methionine is bound by residues G120 and 145–150 (IGDYVL).

It belongs to the RNA methyltransferase TrmD family. In terms of assembly, homodimer.

It localises to the cytoplasm. It catalyses the reaction guanosine(37) in tRNA + S-adenosyl-L-methionine = N(1)-methylguanosine(37) in tRNA + S-adenosyl-L-homocysteine + H(+). Functionally, specifically methylates guanosine-37 in various tRNAs. In Bifidobacterium longum (strain NCC 2705), this protein is tRNA (guanine-N(1)-)-methyltransferase.